Reading from the N-terminus, the 244-residue chain is Phosphoadenosine 5'-phosphosulfate reductase (244 aa).

C239 (nucleophile; cysteine thiosulfonate intermediate) is an active-site residue.

Belongs to the PAPS reductase family. CysH subfamily.

Its subcellular location is the cytoplasm. It carries out the reaction [thioredoxin]-disulfide + sulfite + adenosine 3',5'-bisphosphate + 2 H(+) = [thioredoxin]-dithiol + 3'-phosphoadenylyl sulfate. It participates in sulfur metabolism; hydrogen sulfide biosynthesis; sulfite from sulfate: step 3/3. In terms of biological role, catalyzes the formation of sulfite from phosphoadenosine 5'-phosphosulfate (PAPS) using thioredoxin as an electron donor. This is Phosphoadenosine 5'-phosphosulfate reductase from Pectobacterium carotovorum subsp. carotovorum (strain PC1).